The chain runs to 121 residues: MLTKKEQRLRRARQTRIRIAQQGVARLSVNRTNLHIYASVVSEDGTKVLASASTAEAEVRTQLGAIGKGGNVAAATLIGKRIAEKAKAAGVEKVAFDRAGFAYHGRVKALAEAAREAGLQF.

The protein belongs to the universal ribosomal protein uL18 family. Part of the 50S ribosomal subunit; part of the 5S rRNA/L5/L18/L25 subcomplex. Contacts the 5S and 23S rRNAs.

This is one of the proteins that bind and probably mediate the attachment of the 5S RNA into the large ribosomal subunit, where it forms part of the central protuberance. The protein is Large ribosomal subunit protein uL18 of Delftia acidovorans (strain DSM 14801 / SPH-1).